The sequence spans 143 residues: Period circadian protein (143 aa).

The disordered stretch occupies residues 25-130 (NSKPVTAPTQ…GPSLAADNSI (106 aa)). 2 stretches are compositionally biased toward low complexity: residues 71 to 93 (SGNCTTNSNIRMSSFTNTSITGT) and 114 to 126 (GGAAADAGPSLAA).

Forms a heterodimer with timeless (TIM); the complex then translocates into the nucleus. In terms of processing, phosphorylated with a circadian rhythmicity, probably by the double-time protein (dbt). Phosphorylation could be implicated in the stability of per monomer and in the formation of heterodimer per-tim.

It localises to the nucleus. The protein localises to the cytoplasm. The protein resides in the perinuclear region. Functionally, essential for biological clock functions. Determines the period length of circadian and ultradian rhythms; an increase in PER dosage leads to shortened circadian rhythms and a decrease leads to lengthened circadian rhythms. Essential for the circadian rhythmicity of locomotor activity, eclosion behavior, and for the rhythmic component of the male courtship song that originates in the thoracic nervous system. The biological cycle depends on the rhythmic formation and nuclear localization of the TIM-PER complex. Light induces the degradation of TIM, which promotes elimination of PER. Nuclear activity of the heterodimer coordinatively regulates PER and TIM transcription through a negative feedback loop. Behaves as a negative element in circadian transcriptional loop. Does not appear to bind DNA, suggesting indirect transcriptional inhibition. This Drosophila picticornis (Fruit fly) protein is Period circadian protein (per).